A 625-amino-acid chain; its full sequence is Chromatin structure-remodeling complex subunit RSC4 (625 aa).

The interval Met1–His35 is disordered. 2 consecutive Bromo domains span residues Trp53–Ala158 and Lys181–Glu292. Residues Ser199 and Ser545 each carry the phosphoserine modification. Over residues Arg536–Asn552 the composition is skewed to polar residues. The tract at residues Arg536 to Ile555 is disordered.

Component of the two forms of the RSC complex composed of at least either RSC1 or RSC2, and ARP7, ARP9, LDB7, NPL6, RSC3, RSC30, RSC4, RSC58, RSC6, RSC8, RSC9, SFH1, STH1, HTL1 and probably RTT102. The complexes interact with histone and histone variant components of centromeric chromatin.

It localises to the nucleus. Functionally, component of the chromatin structure remodeling complex (RSC), which is involved in transcription regulation and nucleosome positioning. RSC is responsible for the transfer of a histone octamer from a nucleosome core particle to naked DNA. The reaction requires ATP and involves an activated RSC-nucleosome intermediate. Remodeling reaction also involves DNA translocation, DNA twist and conformational change. As a reconfigurer of centromeric and flanking nucleosomes, RSC complex is required both for proper kinetochore function in chromosome segregation and, via a PKC1-dependent signaling pathway, for organization of the cellular cytoskeleton. The polypeptide is Chromatin structure-remodeling complex subunit RSC4 (RSC4) (Saccharomyces cerevisiae (strain ATCC 204508 / S288c) (Baker's yeast)).